The sequence spans 234 residues: GTP:AMP phosphotransferase, mitochondrial (234 aa).

Residue Gly-24–Thr-29 coordinates GTP. Positions Ser-45 to Leu-74 are NMP. AMP is bound by residues Ser-46, Arg-51, Lys-72 to Leu-74, Gly-103 to Arg-106, and Gln-110. An LID region spans residues Asn-144–Asp-181. GTP is bound by residues Arg-145 and Val-154–Tyr-155. AMP contacts are provided by Arg-178 and Arg-189. GTP is bound at residue Ser-218.

This sequence belongs to the adenylate kinase family. AK3 subfamily. As to quaternary structure, monomer.

It is found in the mitochondrion matrix. It carries out the reaction a ribonucleoside 5'-triphosphate + AMP = a ribonucleoside 5'-diphosphate + ADP. Its function is as follows. Involved in maintaining the homeostasis of cellular nucleotides by catalyzing the interconversion of nucleoside phosphates. Has GTP:AMP phosphotransferase and ITP:AMP phosphotransferase activities. Does not accept ATP as phosphate donor. The protein is GTP:AMP phosphotransferase, mitochondrial of Saccharomyces cerevisiae (Baker's yeast).